The sequence spans 635 residues: MEAVVRRCPFLARVSQAFLQKAGPSLLFYAQHCPKMMEAAPPAAARGLATSASRGQQVEETPAAQPEAKKAKEVAQQNTDGSQPPAGHPPAAAVQSSATKCPFLAAQMNHKSSNVFCKASLELQEDVKEMQVDRKGKEFAKIPTNSVVRNTEAEGEEQSGLLKKFKDIMLKQRPESVSHLLQDNLPKSVSTFQYDQFFEKKIDEKKKDHTYRVFKTVNRKAQIFPMADDYSDSLITKKEVSVWCSNDYLGMSRHPRVCGAVMDTLKQHGAGAGGTRNISGTSKFHVDLEKELADLHGKDAALLFSSCFVANDSTLFTLAKMLPGCEIYSDSGNHASMIQGIRNSRVPKHIFRHNDVNHLRELLKKSDPSTPKIVAFETVHSMDGAVCPLEELCDVAHEHGAITFVDEVHAVGLYGARGGGIGDRDGVMHKMDIISGTLGKAFACVGGYISSTSALIDTVRSYAAGFIFTTSLPPMLLAGALESVRTLKSAEGQVLRRQHQRNVKLMRQMLMDAGLPVVHCPSHIIPIRVADAAKNTEICDKLMSQHSIYVQAINYPTVPRGEELLRIAPTPHHTPQMMSYFLEKLLATWKDVGLELKPHSSAECNFCRRPLHFEVMSERERSYFSGMSKLLSVSA.

Residues 1–56 (MEAVVRRCPFLARVSQAFLQKAGPSLLFYAQHCPKMMEAAPPAAARGLATSASRGQ) constitute a mitochondrion transit peptide. Low complexity predominate over residues 44–66 (AARGLATSASRGQQVEETPAAQP). Positions 44–94 (AARGLATSASRGQQVEETPAAQPEAKKAKEVAQQNTDGSQPPAGHPPAAAV) are disordered. Residues arginine 212, serine 329, and lysine 348 each contribute to the substrate site. The pyridoxal 5'-phosphate site is built by serine 381, histidine 409, and threonine 437. Residue lysine 440 is part of the active site. Position 440 is an N6-(pyridoxal phosphate)lysine (lysine 440). 2 residues coordinate pyridoxal 5'-phosphate: threonine 469 and threonine 470. Threonine 557 is a binding site for substrate.

Belongs to the class-II pyridoxal-phosphate-dependent aminotransferase family. Homodimer. Pyridoxal 5'-phosphate serves as cofactor. In terms of tissue distribution, ubiquitous.

It is found in the mitochondrion inner membrane. It catalyses the reaction succinyl-CoA + glycine + H(+) = 5-aminolevulinate + CO2 + CoA. It participates in porphyrin-containing compound metabolism; protoporphyrin-IX biosynthesis; 5-aminolevulinate from glycine: step 1/1. In terms of biological role, catalyzes the pyridoxal 5'-phosphate (PLP)-dependent condensation of succinyl-CoA and glycine to form aminolevulinic acid (ALA), with CoA and CO2 as by-products. This is 5-aminolevulinate synthase, non-specific, mitochondrial (ALAS1) from Gallus gallus (Chicken).